The following is a 344-amino-acid chain: L-rhamnose-proton symporter (344 aa).

10 consecutive transmembrane segments (helical) span residues 4–24 (AITM…CFYA), 38–58 (WSVG…ALLL), 68–88 (FSLS…IGNI), 101–121 (MGIG…TPII), 137–157 (TLLG…AGQL), 175–195 (LVLA…MNAA), 214–234 (LPSY…FCFI), 259–279 (VLLS…YAWG), 290–310 (ISWM…GLVL), and 323–343 (VLSL…IGMA).

The protein belongs to the L-rhamnose transporter (TC 2.A.7.6) family.

It is found in the cell inner membrane. It carries out the reaction L-rhamnopyranose(in) + H(+)(in) = L-rhamnopyranose(out) + H(+)(out). Functionally, uptake of L-rhamnose across the cytoplasmic membrane with the concomitant transport of protons into the cell (symport system). The chain is L-rhamnose-proton symporter from Escherichia coli O1:K1 / APEC.